The chain runs to 132 residues: UPF0299 membrane protein YohJ (132 aa).

4 helical membrane-spanning segments follow: residues 7–27 (IIWQ…AGIF), 31–51 (LLPV…VLLA), 63–83 (GCYV…VGVM), and 93–113 (FGPV…VVSW).

The protein belongs to the UPF0299 family.

The protein localises to the cell inner membrane. The protein is UPF0299 membrane protein YohJ of Shigella boydii serotype 4 (strain Sb227).